Consider the following 803-residue polypeptide: Volume-regulated anion channel subunit LRRC8C (803 aa).

Residues 1–22 (MIPVTEFRQFSEQQPAFRVLKP) are Cytoplasmic-facing. Residues 23–43 (WWDVFTDYLSVAMLMIGVFGC) traverse the membrane as a helical segment. The Extracellular segment spans residues 44 to 125 (TLQVMQDKII…YERALHWYAK (82 aa)). Cystine bridges form between Cys-54–Cys-308 and Cys-115–Cys-293. Asn-64 and Asn-70 each carry an N-linked (GlcNAc...) asparagine glycan. The chain crosses the membrane as a helical span at residues 126–146 (YFPYLVLIHTLVFMLCSNFWF). Residues 147–266 (KFPGSSSKIE…ILYAMYVRQT (120 aa)) are Cytoplasmic-facing. Positions 177 to 209 (EVSGEDSEEKDNRKNNMSRSNTTQSGPEGSLVN) are disordered. Residues 191 to 209 (NNMSRSNTTQSGPEGSLVN) show a composition bias toward polar residues. Phosphoserine is present on residues Ser-212 and Ser-215. The chain crosses the membrane as a helical span at residues 267-287 (VLKVIKFLIIIAYNSALVSKV). Residues 288–320 (QFTVDCNVDIQDMTGYKNFSCNHTMAHLFSKLS) are Extracellular-facing. The chain crosses the membrane as a helical span at residues 321–341 (FCYLCFVSIYGLTCLYTLYWL). Residues 342–803 (FYRSLKEYSF…SDVREQMKTE (462 aa)) lie on the Cytoplasmic side of the membrane. LRR repeat units follow at residues 397 to 419 (ENKL…QKLQ), 420 to 443 (TNAH…VFEI), 446 to 465 (LQSL…TIAQ), 468 to 490 (NLQE…SFLK), 492 to 513 (NLKV…MYGL), 515 to 536 (NLEE…VTLE), 543 to 563 (SLKI…VVDV), 566 to 586 (HLQK…NNLK), 590 to 611 (NLTE…VFSL), 613 to 634 (SLQE…VSFQ), 638 to 659 (KLTV…IKKL), 661 to 682 (SLER…LFLC), 684 to 705 (KIRY…IGVL), 707 to 728 (SLQY…LYFC), 730 to 751 (KLKT…IGNL), 753 to 774 (FLSY…LGDC), and 776 to 799 (ALKR…VREQ).

It belongs to the LRRC8 family. Heterohexamer; oligomerizes with other LRRC8 proteins (LRRC8A, LRRC8B, LRRC8D and/or LRRC8E) to form a heterohexamer. Homoheptamer; inactive, likely because it is not targeted to the plasma membrane in the absence of LRRC8A. In vivo, the subunit composition may depend primarily on expression levels, and heterooligomeric channels containing various proportions of the different LRRC8 proteins may coexist.

Its subcellular location is the cell membrane. It localises to the endoplasmic reticulum membrane. The enzyme catalyses chloride(in) = chloride(out). It carries out the reaction iodide(out) = iodide(in). It catalyses the reaction taurine(out) = taurine(in). The catalysed reaction is 2',3'-cGAMP(out) = 2',3'-cGAMP(in). Its function is as follows. Non-essential component of the volume-regulated anion channel (VRAC, also named VSOAC channel), an anion channel required to maintain a constant cell volume in response to extracellular or intracellular osmotic changes. The VRAC channel conducts iodide better than chloride and can also conduct organic osmolytes like taurine. Plays a redundant role in the efflux of amino acids, such as aspartate and glutamate, in response to osmotic stress. The VRAC channel also mediates transport of immunoreactive cyclic dinucleotide GMP-AMP (2'-3'-cGAMP), an immune messenger produced in response to DNA virus in the cytosol. Channel activity requires LRRC8A plus at least one other family member (LRRC8B, LRRC8C, LRRC8D or LRRC8E); channel characteristics depend on the precise subunit composition. This is Volume-regulated anion channel subunit LRRC8C from Bos taurus (Bovine).